A 562-amino-acid polypeptide reads, in one-letter code: Phosphoacetylglucosamine mutase (562 aa).

The Phosphoserine intermediate role is filled by serine 74. Mg(2+)-binding residues include serine 74, aspartate 291, aspartate 293, and aspartate 295. Residues 395–397 (EAN), 526–530 (RPSGT), and arginine 535 each bind substrate.

Belongs to the phosphohexose mutase family. Requires Mg(2+) as cofactor.

The catalysed reaction is N-acetyl-alpha-D-glucosamine 1-phosphate = N-acetyl-D-glucosamine 6-phosphate. Its pathway is nucleotide-sugar biosynthesis; UDP-N-acetyl-alpha-D-glucosamine biosynthesis; N-acetyl-alpha-D-glucosamine 1-phosphate from alpha-D-glucosamine 6-phosphate (route I): step 2/2. In terms of biological role, interconverts GlcNAc-6-P and GlcNAc-1-P. The polypeptide is Phosphoacetylglucosamine mutase (Oryza sativa subsp. japonica (Rice)).